A 204-amino-acid chain; its full sequence is N-alpha-acetyltransferase 40 (204 aa).

The 164-residue stretch at 39-202 (EIYHHLEKGL…YYILYTKSRK (164 aa)) folds into the N-acetyltransferase domain. Substrate contacts are provided by residues tyrosine 64, 107–109 (TVE), and tyrosine 118. Residues 120–122 (IQL) and 128–133 (GRNVGK) contribute to the acetyl-CoA site. Residue threonine 154 coordinates substrate. Residue asparagine 159 coordinates acetyl-CoA. Serine 176 is a substrate binding site.

This sequence belongs to the acetyltransferase family. NAA40 subfamily.

The protein resides in the cytoplasm. The protein localises to the nucleus. The enzyme catalyses N-terminal L-seryl-[histone H4] + acetyl-CoA = N-terminal N(alpha)-acetyl-L-seryl-[histone H4] + CoA + H(+). The catalysed reaction is N-terminal L-seryl-[histone H2A] + acetyl-CoA = N-terminal N(alpha)-acetyl-L-seryl-[histone H2A] + CoA + H(+). In terms of biological role, N-alpha-acetyltransferase that specifically mediates the acetylation of the N-terminal residues of histones H4 and H2A. The chain is N-alpha-acetyltransferase 40 from Schizosaccharomyces pombe (strain 972 / ATCC 24843) (Fission yeast).